Consider the following 393-residue polypeptide: S-adenosylmethionine synthase 1 (393 aa).

Glutamate 9 is a Mg(2+) binding site. Position 15 (histidine 15) interacts with ATP. Glutamate 43 is a K(+) binding site. The L-methionine site is built by glutamate 56 and glutamine 99. Residues 167–169, 235–238, aspartate 246, 252–253, alanine 269, lysine 273, and lysine 277 contribute to the ATP site; these read DGK, SGRF, and RK. Aspartate 246 contributes to the L-methionine binding site. Residue lysine 277 coordinates L-methionine.

Belongs to the AdoMet synthase family. Homotetramer. Mn(2+) is required as a cofactor. Mg(2+) serves as cofactor. Requires Co(2+) as cofactor. It depends on K(+) as a cofactor.

It is found in the cytoplasm. The catalysed reaction is L-methionine + ATP + H2O = S-adenosyl-L-methionine + phosphate + diphosphate. It functions in the pathway amino-acid biosynthesis; S-adenosyl-L-methionine biosynthesis; S-adenosyl-L-methionine from L-methionine: step 1/1. Catalyzes the formation of S-adenosylmethionine from methionine and ATP. The reaction comprises two steps that are both catalyzed by the same enzyme: formation of S-adenosylmethionine (AdoMet) and triphosphate, and subsequent hydrolysis of the triphosphate. This is S-adenosylmethionine synthase 1 (METK1) from Picea sitchensis (Sitka spruce).